A 456-amino-acid chain; its full sequence is Exodeoxyribonuclease 7 large subunit (456 aa).

The protein belongs to the XseA family. As to quaternary structure, heterooligomer composed of large and small subunits.

The protein resides in the cytoplasm. It carries out the reaction Exonucleolytic cleavage in either 5'- to 3'- or 3'- to 5'-direction to yield nucleoside 5'-phosphates.. Bidirectionally degrades single-stranded DNA into large acid-insoluble oligonucleotides, which are then degraded further into small acid-soluble oligonucleotides. In Erwinia tasmaniensis (strain DSM 17950 / CFBP 7177 / CIP 109463 / NCPPB 4357 / Et1/99), this protein is Exodeoxyribonuclease 7 large subunit.